Reading from the N-terminus, the 523-residue chain is MAAEREPPPLGDGKPTDFEDLEDGEDLFTSTVSTLESSPSSPEPASLPAEDISANSNGPKPTEVGLDDDREDLFAEATEEVSLDSPEREPILSSEPSPAVTPVTPTTLIAPRIESKSMSAPVIFDRSREEIEEEANGDIFDIEIGVSDPEKVGDGMNAYMAYRVTTKTSLSMFSKSEFSVKRRFSDFLGLHSKLASKYLHVGYIVPPAPEKSIVGMTKVKVGKEDSSSTEFVEKRRAALERYLQRTVKHPTLLQDPDLRQFLESSELPRAVNTQALSGAGILRMVNKAADAVNKMTIKMNESDAWFEEKQQQFENLDQQLRKLHASVEALVCHRKELSANTAAFAKSAAMLGNSEDHTALSRALSQLAEVEEKIDQLHQEQAFADFYMFSELLSDYIRLIAAVKGVFDHRMKCWQKWEDAQITLLKKREAEAKMMVANKPDKIQQAKNEIREEIEEWEAKVQQGERDFEQISKTIRKEVGRFEKERVKDFKTVIIKYLESLVQTQQQLIKYWEAFLPEAKAIA.

The tract at residues 1-104 (MAAEREPPPL…EPSPAVTPVT (104 aa)) is disordered. Low complexity-rich tracts occupy residues 27–50 (LFTS…LPAE) and 93–104 (SSEPSPAVTPVT). Position 97 is a phosphoserine (Ser-97). Residues Thr-101 and Thr-104 each carry the phosphothreonine modification. Ser-117 and Ser-119 each carry phosphoserine. The PX domain occupies 140-269 (FDIEIGVSDP…QFLESSELPR (130 aa)). A 1,2-diacyl-sn-glycero-3-phospho-(1D-myo-inositol-3-phosphate) is bound by residues Arg-183, Ser-185, Lys-211, and Arg-235. Phosphoserine is present on Ser-185. The interval 260–523 (QFLESSELPR…AFLPEAKAIA (264 aa)) is interaction with RhoG. Ser-277 is modified (phosphoserine). The tract at residues 278 to 295 (GAGILRMVNKAADAVNKM) is membrane-binding amphipathic helix. Positions 299-523 (MNESDAWFEE…AFLPEAKAIA (225 aa)) constitute a BAR domain. Lys-473 carries the N6-acetyllysine modification.

The protein belongs to the sorting nexin family. In terms of assembly, predominantly forms heterodimers with BAR domain-containing sorting nexins SNX5, SNX6 and SNX32; can self-associate to form homodimers. The heterodimers are proposed to self-assemble into helical arrays on the membrane to stabilize and expand local membrane curvature underlying endosomal tubule formation. Thought to be a component of the originally described retromer complex (also called SNX-BAR retromer) which is a pentamer containing the heterotrimeric retromer cargo-selective complex (CSC), also described as vacuolar protein sorting subcomplex (VPS), and a heterodimeric membrane-deforming subcomplex formed between SNX1 or SNX2 and SNX5 or SNX6 (also called SNX-BAR subcomplex); the respective CSC and SNX-BAR subcomplexes associate with low affinity. Interacts with SNX5, SNX6, SNX32, VPS26A, VPS29, VPS35, FNBP1, KALRN, RHOG (GDP-bound form).

The protein localises to the early endosome membrane. It localises to the cell projection. The protein resides in the lamellipodium. Its function is as follows. Involved in several stages of intracellular trafficking. Interacts with membranes containing phosphatidylinositol 3-phosphate (PtdIns(3P)) or phosphatidylinositol 3,5-bisphosphate (PtdIns(3,5)P2). Acts in part as component of the retromer membrane-deforming SNX-BAR subcomplex. The SNX-BAR retromer mediates retrograde transport of cargo proteins from endosomes to the trans-Golgi network (TGN) and is involved in endosome-to-plasma membrane transport for cargo protein recycling. The SNX-BAR subcomplex functions to deform the donor membrane into a tubular profile called endosome-to-TGN transport carrier (ETC). Can sense membrane curvature and has in vitro vesicle-to-membrane remodeling activity. Required for retrograde endosome-to-TGN transport of TGN38. Promotes KALRN- and RHOG-dependent but retromer-independent membrane remodeling such as lamellipodium formation; the function is dependent on GEF activity of KALRN. The sequence is that of Sorting nexin-2 (SNX2) from Macaca fascicularis (Crab-eating macaque).